A 518-amino-acid polypeptide reads, in one-letter code: Reduced folate transporter (518 aa).

Methionine 1 bears the N-acetylmethionine mark. Topologically, residues 1–29 (MVPTGQVAEKQACEEPRQDRELKSWRCLV) are cytoplasmic. A helical membrane pass occupies residues 30–50 (FYLCFFGFMAQLRPGESFITP). Residues isoleucine 48 and threonine 49 each contribute to the folate site. Over 51-62 (YLLQQNFTIEQV) the chain is Extracellular. Asparagine 56 carries an N-linked (GlcNAc...) asparagine glycan. A helical membrane pass occupies residues 63 to 85 (TNEIIPVLPYSHLAVLVPIFLLT). The Cytoplasmic portion of the chain corresponds to 86-89 (DYLR). Residues 90-110 (YKPILILQCLSFMCVWLLLLL) traverse the membrane as a helical segment. The Extracellular portion of the chain corresponds to 111–114 (GTSV). A helical membrane pass occupies residues 115 to 137 (VHMQLMEVFYSVTMAARIAYSSY). Folate is bound by residues glutamate 121 and arginine 131. Over 138-151 (IFSLVRPSRYQRMA) the chain is Cytoplasmic. The chain crosses the membrane as a helical span at residues 152 to 176 (SYSRAAVLLGVFTSSVLGQVLWPLE). Position 162 (valine 162) interacts with folate. Topologically, residues 177-181 (QKSQN) are extracellular. Residues 182–200 (SNMLNYISLGFIIFSLGLS) traverse the membrane as a helical segment. Residues 201 to 266 (LFLKRPKHSL…LSELVGNLRQ (66 aa)) lie on the Cytoplasmic side of the membrane. The chain crosses the membrane as a helical span at residues 267–292 (PQLRLWCLWWVFNSAGYYLIVYYVHV). The folate site is built by alanine 281, glycine 282, and isoleucine 286. At 293 to 300 (LWSIDKNL) the chain is on the extracellular side. A helical transmembrane segment spans residues 301–323 (NYNGAVDAASTLLSAITSFSAGF). The Cytoplasmic segment spans residues 324 to 329 (VKIRWA). The chain crosses the membrane as a helical span at residues 330-350 (LWSKLVIASVIAIQAGLVFCM). Topologically, residues 351-353 (YMV) are extracellular. A helical membrane pass occupies residues 354-377 (HYVTWVHKIWVLYMTYVLFRGAYQ). Residues tyrosine 366 and valine 370 each coordinate folate. At 378-391 (FLVPIATFQIASSL) the chain is on the cytoplasmic side. The helical transmembrane segment at 392-415 (SKELCALVFGINTFLATALKTAIT) threads the bilayer. A required for substrate-binding region spans residues 407–419 (ATALKTAITLVVS). Over 416-423 (LVVSDKRG) the chain is Extracellular. The chain crosses the membrane as a helical span at residues 424 to 448 (LGLKVEKQFCIYSVYFMVLSVICFV). The Cytoplasmic segment spans residues 449 to 512 (GAVLDGVRYC…DGVEDSEASL (64 aa)). Residues serine 473, serine 478, and serine 483 each carry the phosphoserine modification. The tract at residues 480–518 (QVPSMQDGGLGGLQPSAPQLLPEDGVEDSEASLRAEAKA) is disordered.

This sequence belongs to the reduced folate carrier (RFC) transporter (TC 2.A.48) family.

It localises to the cell membrane. The protein resides in the apical cell membrane. Its subcellular location is the basolateral cell membrane. It catalyses the reaction 5-amino-1-(5-phospho-beta-D-ribosyl)imidazole-4-carboxamide(in) + (6S)-5-methyl-5,6,7,8-tetrahydrofolate(out) = 5-amino-1-(5-phospho-beta-D-ribosyl)imidazole-4-carboxamide(out) + (6S)-5-methyl-5,6,7,8-tetrahydrofolate(in). Its function is as follows. Antiporter that mediates the import of reduced folates, driven by the export of organic anions. Also acts as an importer of immunoreactive cyclic dinucleotides, but with a lower transporter activity. Mechanistically, acts as a secondary active transporter, which exports intracellular organic anions down their concentration gradients to facilitate the uptake of its substrates. Has high affinity for N5-methyltetrahydrofolate, the predominant circulating form of folate. Also mediates the import of antifolate drug methotrexate. 5-amino-4-imidazolecarboxamide riboside (AICAR), when phosphorylated to AICAR monophosphate, can serve as an organic anion for antiporter activity. This is Reduced folate transporter from Cricetulus griseus (Chinese hamster).